We begin with the raw amino-acid sequence, 147 residues long: Hemoglobin subunit epsilon-2 (147 aa).

In terms of domain architecture, Globin spans 3–147 (HFTTEENVAV…VANALTHKYH (145 aa)). Residues Tyr-64 and His-93 each coordinate heme b.

Belongs to the globin family. Red blood cells.

Hemoglobin epsilon chain is a beta-type chain found in early embryos. This is Hemoglobin subunit epsilon-2 (HBE2) from Bos taurus (Bovine).